An 88-amino-acid chain; its full sequence is Small ribosomal subunit protein uS15 (88 aa).

It belongs to the universal ribosomal protein uS15 family. In terms of assembly, part of the 30S ribosomal subunit. Forms a bridge to the 50S subunit in the 70S ribosome, contacting the 23S rRNA.

Functionally, one of the primary rRNA binding proteins, it binds directly to 16S rRNA where it helps nucleate assembly of the platform of the 30S subunit by binding and bridging several RNA helices of the 16S rRNA. Forms an intersubunit bridge (bridge B4) with the 23S rRNA of the 50S subunit in the ribosome. The sequence is that of Small ribosomal subunit protein uS15 from Desulfitobacterium hafniense (strain Y51).